The following is a 466-amino-acid chain: MSQEIWADVLAYVRKNVSDLEYTTWFAPVKPLGVQEGSLLLGVRNSFTKDWFRDHYLELLLAALRSLGAEHPQVEFQVLPAAQDALLLPNDPPPAPEAAAPTPKTKAAPTPPPSTPGDNRKTLNPKYTFENFVVGPNNNLAHAAALAVAESPGKAYNPLFIYGDVGLGKTHLMHAVGHYLAERFPEKRIEYVSTETFTNELINAIRDDKTTQFRNRYRSVDLLLVDDIQFLAGKERTQEEFFHTFNALYESNKQIILSSDRPPKDIQTLEGRLRSRFEWGLITDIQSPEYETRVAILKMNAEQGHITIPQEVLELIARQVTSNIRELEGALMRVVAFASLNNVPFSRAAAAKALSNVFAPQEAKVEMTDVLRQVAAHYGTTPDLIRGSGRARDIVVPRQVAQYLIRALTDHSLPEIGQFFGRDHSTVMHAVSKITEQMGKDPELAATVNTLRNRIQGKEEEEEVGA.

A domain I, interacts with DnaA modulators region spans residues 1 to 77 (MSQEIWADVL…GAEHPQVEFQ (77 aa)). Positions 77–121 (QVLPAAQDALLLPNDPPPAPEAAAPTPKTKAAPTPPPSTPGDNRK) are domain II. The segment at 87–122 (LLPNDPPPAPEAAAPTPKTKAAPTPPPSTPGDNRKT) is disordered. Residues 97–108 (EAAAPTPKTKAA) are compositionally biased toward low complexity. The interval 122-338 (TLNPKYTFEN…GALMRVVAFA (217 aa)) is domain III, AAA+ region. Residues Gly-166, Gly-168, Lys-169, and Thr-170 each contribute to the ATP site. The domain IV, binds dsDNA stretch occupies residues 339-466 (SLNNVPFSRA…GKEEEEEVGA (128 aa)).

It belongs to the DnaA family. Oligomerizes as a right-handed, spiral filament on DNA at oriC.

It is found in the cytoplasm. Functionally, plays an essential role in the initiation and regulation of chromosomal replication. ATP-DnaA binds to the origin of replication (oriC) to initiate formation of the DNA replication initiation complex once per cell cycle. Binds the DnaA box (a 9 base pair repeat at the origin) and separates the double-stranded (ds)DNA. Forms a right-handed helical filament on oriC DNA; dsDNA binds to the exterior of the filament while single-stranded (ss)DNA is stabiized in the filament's interior. The ATP-DnaA-oriC complex binds and stabilizes one strand of the AT-rich DNA unwinding element (DUE), permitting loading of DNA polymerase. After initiation quickly degrades to an ADP-DnaA complex that is not apt for DNA replication. Binds acidic phospholipids. Strand separation requires the DnaA boxes and adjacent DnaA-trio motifs but works equally well with ADP or ATP. The polypeptide is Chromosomal replication initiator protein DnaA (Deinococcus radiodurans (strain ATCC 13939 / DSM 20539 / JCM 16871 / CCUG 27074 / LMG 4051 / NBRC 15346 / NCIMB 9279 / VKM B-1422 / R1)).